A 712-amino-acid chain; its full sequence is Dynamin-1-like protein drp-1 (712 aa).

Residues 24-304 enclose the Dynamin-type G domain; that stretch reads QIQLPQIVVV…LMHHIRNCLP (281 aa). Residues 34-41 are G1 motif; it reads GSQSAGKS. Positions 60-62 are G2 motif; the sequence is VTR. Residues 148 to 151 form a G3 motif region; the sequence is DLPG. Positions 217 to 220 are G4 motif; that stretch reads TKLD. The segment at 247-250 is G5 motif; it reads VNRS. The tract at residues 280–502 is interaction with caspase ced-9; it reads SRNGTPYLAK…LAYINTKHPE (223 aa). The tract at residues 523 to 542 is disordered; that stretch reads GRSRNRHASTGERAVSAHGE. The GED domain occupies 620 to 711; the sequence is VAIIERLIRN…IISEVRETQV (92 aa).

This sequence belongs to the TRAFAC class dynamin-like GTPase superfamily. Dynamin/Fzo/YdjA family. In terms of assembly, interacts (via residues 280-502) with caspase ced-9; the interaction is enhanced by GTP rather than GDP; the interaction is probably direct and may occur at the mitochondrion. As to expression, highly expressed in neurons, in intestinal cells and in the body wall, pharyngeal, and vulval muscles.

Its subcellular location is the mitochondrion. The protein resides in the mitochondrion outer membrane. It is found in the cytoplasm. The protein localises to the cytosol. It catalyses the reaction GTP + H2O = GDP + phosphate + H(+). With respect to regulation, GTPase activity is increased by binding to phospholipid membranes. Its function is as follows. Functions in mitochondrial division. Functions in peroxisomal division. Mediates membrane fission, perhaps mainly of the mitochondrial outer membrane. Mitochondrial fission may be promoted by recruitment to mitochondrial membranes via the egl-1/ced-9 complex. Involved in the coordination of mitochondrial division with autophagy in response to acute heat stress during larval development. Plays a role in apoptosis by promoting mitochondrial elimination and cell-death execution, acting downstream of caspase ced-3, and perhaps independently of FIS1-related protein fis-2, caspase ced-9 and apoptosis-inducing factor AIFM/wah-1. Role in promoting apoptosis dependent upon cleavage of drp-1 by ced-3. Involved in negatively modulating longevity in concert with the Insulin/IGF-1-like signaling (IIS) mediated pathway. This is Dynamin-1-like protein drp-1 from Caenorhabditis elegans.